We begin with the raw amino-acid sequence, 193 residues long: Cytochrome c biogenesis ATP-binding export protein CcmA (193 aa).

The ABC transporter domain occupies 9–191; it reads LSASGLAILR…AAGFPVTAEV (183 aa). 41–48 is a binding site for ATP; that stretch reads GANGAGKT.

It belongs to the ABC transporter superfamily. CcmA exporter (TC 3.A.1.107) family. In terms of assembly, the complex is composed of two ATP-binding proteins (CcmA) and two transmembrane proteins (CcmB).

It localises to the cell inner membrane. It catalyses the reaction heme b(in) + ATP + H2O = heme b(out) + ADP + phosphate + H(+). Functionally, part of the ABC transporter complex CcmAB involved in the biogenesis of c-type cytochromes; once thought to export heme, this seems not to be the case, but its exact role is uncertain. Responsible for energy coupling to the transport system. In Hyphomonas neptunium (strain ATCC 15444), this protein is Cytochrome c biogenesis ATP-binding export protein CcmA.